The sequence spans 142 residues: Serine/threonine-protein kinase BtrW (142 aa).

This sequence belongs to the anti-sigma-factor family. Probably able to multimerize; interacts with BtrV.

It catalyses the reaction L-seryl-[protein] + ATP = O-phospho-L-seryl-[protein] + ADP + H(+). It carries out the reaction L-threonyl-[protein] + ATP = O-phospho-L-threonyl-[protein] + ADP + H(+). Functionally, possible negative regulator of sigma-B activity. Phosphorylates and inactivates its specific antagonist protein, BtrV. Upon phosphorylation of BtrV, BtrW is released and binds to an unknown partner(s) that might be sigma-B, thereby blocking its ability to form a complex with its partner (possibly an RNA polymerase holoenzyme (E-sigma-B)). Involved in type III secretion system (T3SS). Phosphorylates BtrV. The chain is Serine/threonine-protein kinase BtrW (btrW) from Bordetella bronchiseptica (strain ATCC BAA-588 / NCTC 13252 / RB50) (Alcaligenes bronchisepticus).